The primary structure comprises 133 residues: Small ribosomal subunit protein uS9 (133 aa).

Residues 111–133 are disordered; sequence PRRSESKKFGGPGARARKQKSYR.

It belongs to the universal ribosomal protein uS9 family.

The sequence is that of Small ribosomal subunit protein uS9 from Methanosphaera stadtmanae (strain ATCC 43021 / DSM 3091 / JCM 11832 / MCB-3).